Reading from the N-terminus, the 113-residue chain is uncharacterized protein (113 aa).

Residues 1–38 (MVKIERKATDSAYHEFTKILTSSAQLMAFLNQSDFVKA) form the signal peptide.

This is an uncharacterized protein from Haemophilus influenzae (strain ATCC 51907 / DSM 11121 / KW20 / Rd).